Consider the following 192-residue polypeptide: UPF0312 protein PFLU_5725 (192 aa).

A signal peptide spans 1–23 (MLKKTLAALAIGTALLSAGQVMA).

The protein belongs to the UPF0312 family. Type 1 subfamily.

The protein resides in the periplasm. This Pseudomonas fluorescens (strain SBW25) protein is UPF0312 protein PFLU_5725.